The chain runs to 831 residues: MLTIQFLCPLPNGLHARPAWELKEQCSQWQSEITFINHRQNAKADAKSSLALIGTGTLFNDSCSLNISGSDEEQARRVLEEYILVRFIDSDSVQPTQAELTAHPLPRSLSRLNPDLLYGNVLASGVGVGTLTLLQSDSLDSYRAIPASAQDSTRLEHSLATLAEQLNQQLRERDGESKTILSAHLSLIQDDEFAGNIRRLMTEQHQGLGAAIISNMEQVCAKLSASASDYLRERVSDIRDISEQLLHITWPELKPRNNLVLEKPTILVAEDLTPSQFLSLDLKNLAGMILEKTGRTSHTLILARASAIPVLSGLPLDAIARYAGQPAVLDAQCGVLAINPNDAVSGYYQVAQTLADKRQKQQAQAAAQLAYSRDNKRIDIVANIGTALEAPGAFANGAEGVGLFRTEMLYMDRDSAPDEQEQFEAYQQVLLAAGDKPIIFRTMDIGGDKSIPYLNIPQEENPFLGYRAVRIYPEFAGLFRTQLRAILRAASFGNAQLMIPMVHSLDQILWVKGEIQKAIVELKRDGLRHAETITLGIMVEVPSVCYIIDHFCDEVDFFSIGSNDMTQYLYAVDRNNPRVSPLYNPITPSFLRMLQQIVTTAHQRGKWVGICGELGGESRYLPLLLGLGLDELSMSSPRIPAVKSQLRQLDSEACRELARQACECRSAQEIEALLTAFTPEEDVRPLLALENIFVDQDFSNKEQAIQFLCGNLGVNGRTEHPFELEEDVWQREEIVTTGVGFGVAIPHTKSQWIRHSSISIARLAKPVDWQSEMGEVELVIMLTLGANEGMNHVKVFSQLARKLVNKNFRQSLFAAQDAQSILTLLETELTF.

The 90-residue stretch at 1 to 90 (MLTIQFLCPL…EYILVRFIDS (90 aa)) folds into the HPr domain. Residue His-15 is the Pros-phosphohistidine intermediate; for HPr activity of the active site. His-15 is modified (phosphohistidine; by EI). Positions 119–650 (GNVLASGVGV…AVKSQLRQLD (532 aa)) are PTS EI. The Tele-phosphohistidine intermediate; for PTS EI activity role is filled by His-298. A Phosphohistidine; by autocatalysis modification is found at His-298. Residues Arg-405 and Arg-441 each contribute to the phosphoenolpyruvate site. 2 residues coordinate Mg(2+): Glu-540 and Asp-564. Residues 563–564 (ND) and Arg-574 each bind phosphoenolpyruvate. Cys-611 (proton donor; for EI activity) is an active-site residue. The PTS EIIA type-2 domain occupies 685–828 (PLLALENIFV…QSILTLLETE (144 aa)). His-747 acts as the Tele-phosphohistidine intermediate; for PTS EIIA activity in catalysis. His-747 is subject to Phosphohistidine; by HPr.

Belongs to the PEP-utilizing enzyme family. Mg(2+) is required as a cofactor.

It localises to the cytoplasm. The enzyme catalyses L-histidyl-[protein] + phosphoenolpyruvate = N(pros)-phospho-L-histidyl-[protein] + pyruvate. The catalysed reaction is D-fructose(out) + N(pros)-phospho-L-histidyl-[protein] = D-fructose 1-phosphate(in) + L-histidyl-[protein]. Its function is as follows. Multifunctional protein that includes general (non sugar-specific) and sugar-specific components of the phosphoenolpyruvate-dependent sugar phosphotransferase system (sugar PTS). This major carbohydrate active transport system catalyzes the phosphorylation of incoming sugar substrates concomitantly with their translocation across the cell membrane. The enzyme II FryABC PTS system is involved in fructose transport. This chain is Multiphosphoryl transfer protein (fryA), found in Shigella flexneri.